The sequence spans 471 residues: Soluble pyridine nucleotide transhydrogenase (471 aa).

An FAD-binding site is contributed by 41-50 (EREPSVGGGC).

It belongs to the class-I pyridine nucleotide-disulfide oxidoreductase family. Requires FAD as cofactor.

It is found in the cytoplasm. It catalyses the reaction NAD(+) + NADPH = NADH + NADP(+). Functionally, conversion of NADPH, generated by peripheral catabolic pathways, to NADH, which can enter the respiratory chain for energy generation. The chain is Soluble pyridine nucleotide transhydrogenase from Aliivibrio fischeri (strain ATCC 700601 / ES114) (Vibrio fischeri).